Reading from the N-terminus, the 510-residue chain is 2,3-bisphosphoglycerate-independent phosphoglycerate mutase (510 aa).

The Mn(2+) site is built by aspartate 13 and serine 63. Residue serine 63 is the Phosphoserine intermediate of the active site. Substrate contacts are provided by residues histidine 124, arginine 154–aspartate 155, arginine 186, arginine 192, arginine 262–arginine 265, and lysine 334. Mn(2+)-binding residues include aspartate 401, histidine 405, aspartate 442, histidine 443, and histidine 461.

Belongs to the BPG-independent phosphoglycerate mutase family. Monomer. Mn(2+) is required as a cofactor.

It carries out the reaction (2R)-2-phosphoglycerate = (2R)-3-phosphoglycerate. Its pathway is carbohydrate degradation; glycolysis; pyruvate from D-glyceraldehyde 3-phosphate: step 3/5. Its function is as follows. Catalyzes the interconversion of 2-phosphoglycerate and 3-phosphoglycerate. The sequence is that of 2,3-bisphosphoglycerate-independent phosphoglycerate mutase from Vibrio vulnificus (strain YJ016).